A 154-amino-acid polypeptide reads, in one-letter code: Host transcription reprogramming factor 5 (154 aa).

An N-terminal signal peptide occupies residues 1 to 19 (MQILRIAQLMALLATCASA). The interval 24 to 85 (TGSRVYSRDV…KRIKAEQNAR (62 aa)) is disordered. The segment covering 35-50 (QTQGGFSGSPTTNSPD) has biased composition (polar residues). Basic and acidic residues predominate over residues 69–85 (ETEKERKKRIKAEQNAR). The segment at 96–121 (YQCPYCSDPTVFSHSDALGRHIYTIH) adopts a C2H2-type; degenerate zinc-finger fold.

The protein resides in the secreted. The protein localises to the host nucleus. Probable secreted effector that translocates into the nuclei of host cells to reprogram the expression of targeted genes by binding on effector binding elements in rice. The chain is Host transcription reprogramming factor 5 from Pyricularia oryzae (strain 70-15 / ATCC MYA-4617 / FGSC 8958) (Rice blast fungus).